We begin with the raw amino-acid sequence, 160 residues long: Cytochrome b6-f complex subunit 4 (160 aa).

3 helical membrane passes run 36 to 56, 95 to 115, and 131 to 151; these read LLYI…GLAV, LLGI…PFIE, and TVFL…ALPI.

Belongs to the cytochrome b family. PetD subfamily. In terms of assembly, the 4 large subunits of the cytochrome b6-f complex are cytochrome b6, subunit IV (17 kDa polypeptide, PetD), cytochrome f and the Rieske protein, while the 4 small subunits are PetG, PetL, PetM and PetN. The complex functions as a dimer.

The protein resides in the cellular thylakoid membrane. In terms of biological role, component of the cytochrome b6-f complex, which mediates electron transfer between photosystem II (PSII) and photosystem I (PSI), cyclic electron flow around PSI, and state transitions. The protein is Cytochrome b6-f complex subunit 4 of Parasynechococcus marenigrum (strain WH8102).